The chain runs to 647 residues: Glutamyl-tRNA(Gln) amidotransferase subunit B, mitochondrial (647 aa).

The N-terminal 16 residues, 1–16, are a transit peptide targeting the mitochondrion; sequence MARNLCRNVQTTPRPL. Residues 39-77 are disordered; that stretch reads PRPRYFGSSTAKSAKKKSNNKAYSGSSMSAGDASAGPSR. Over residues 58–76 the composition is skewed to low complexity; it reads NKAYSGSSMSAGDASAGPS.

It belongs to the GatB/GatE family. GatB subfamily. Subunit of the heterotrimeric GatCAB amidotransferase (AdT) complex, composed of A, B and C subunits.

The protein localises to the mitochondrion. It carries out the reaction L-glutamyl-tRNA(Gln) + L-glutamine + ATP + H2O = L-glutaminyl-tRNA(Gln) + L-glutamate + ADP + phosphate + H(+). Functionally, allows the formation of correctly charged Gln-tRNA(Gln) through the transamidation of misacylated Glu-tRNA(Gln) in the mitochondria. The reaction takes place in the presence of glutamine and ATP through an activated gamma-phospho-Glu-tRNA(Gln). The sequence is that of Glutamyl-tRNA(Gln) amidotransferase subunit B, mitochondrial from Mycosarcoma maydis (Corn smut fungus).